The chain runs to 554 residues: Dihydroxy-acid dehydratase (554 aa).

Mg(2+) is bound at residue D78. C119 lines the [2Fe-2S] cluster pocket. Residues D120 and K121 each coordinate Mg(2+). An N6-carboxylysine modification is found at K121. Residue C191 coordinates [2Fe-2S] cluster. E444 provides a ligand contact to Mg(2+). The active-site Proton acceptor is S470.

Belongs to the IlvD/Edd family. Homodimer. [2Fe-2S] cluster is required as a cofactor. Requires Mg(2+) as cofactor.

It carries out the reaction (2R)-2,3-dihydroxy-3-methylbutanoate = 3-methyl-2-oxobutanoate + H2O. The enzyme catalyses (2R,3R)-2,3-dihydroxy-3-methylpentanoate = (S)-3-methyl-2-oxopentanoate + H2O. It participates in amino-acid biosynthesis; L-isoleucine biosynthesis; L-isoleucine from 2-oxobutanoate: step 3/4. The protein operates within amino-acid biosynthesis; L-valine biosynthesis; L-valine from pyruvate: step 3/4. Functionally, functions in the biosynthesis of branched-chain amino acids. Catalyzes the dehydration of (2R,3R)-2,3-dihydroxy-3-methylpentanoate (2,3-dihydroxy-3-methylvalerate) into 2-oxo-3-methylpentanoate (2-oxo-3-methylvalerate) and of (2R)-2,3-dihydroxy-3-methylbutanoate (2,3-dihydroxyisovalerate) into 2-oxo-3-methylbutanoate (2-oxoisovalerate), the penultimate precursor to L-isoleucine and L-valine, respectively. In Nitratidesulfovibrio vulgaris (strain ATCC 29579 / DSM 644 / CCUG 34227 / NCIMB 8303 / VKM B-1760 / Hildenborough) (Desulfovibrio vulgaris), this protein is Dihydroxy-acid dehydratase.